The sequence spans 395 residues: Chorismate synthase (395 aa).

The NADP(+) site is built by Arg-40 and Arg-46. FMN is bound by residues 137 to 139 (RSS), Gly-308, 323 to 327 (KPLPT), and Arg-349.

It belongs to the chorismate synthase family. In terms of assembly, homotetramer. FMNH2 is required as a cofactor.

The catalysed reaction is 5-O-(1-carboxyvinyl)-3-phosphoshikimate = chorismate + phosphate. It participates in metabolic intermediate biosynthesis; chorismate biosynthesis; chorismate from D-erythrose 4-phosphate and phosphoenolpyruvate: step 7/7. Functionally, catalyzes the anti-1,4-elimination of the C-3 phosphate and the C-6 proR hydrogen from 5-enolpyruvylshikimate-3-phosphate (EPSP) to yield chorismate, which is the branch point compound that serves as the starting substrate for the three terminal pathways of aromatic amino acid biosynthesis. This reaction introduces a second double bond into the aromatic ring system. This chain is Chorismate synthase, found in Gloeobacter violaceus (strain ATCC 29082 / PCC 7421).